The primary structure comprises 291 residues: MNETVEALDPNEPRLITESGVAARIAAIVTPVLADLNLRLVRVKVTARDGGTCQIMAERPDGSMTIDDCEAASRAISPVLDVEDPITGAYRLEISSPGIDRPLVRLTDFDRWAGHEVKVEMAVPVDGRKRFRGILIGTRAELAVVKRTDAPKGEEPEVSLPVADIGEAKLVLTDALITEALRRAKAAERGLGEDEEFEDDADEVFEGDEADEKAAKDAANAERANAKKAADKAEKRAGKVARKAAKSEKAEKSQAKTGKARLSKAEVDDLAVTNPASRALRGGKPKAKETH.

The tract at residues 188–291 (ERGLGEDEEF…GGKPKAKETH (104 aa)) is disordered. Acidic residues predominate over residues 193 to 211 (EDEEFEDDADEVFEGDEAD). Composition is skewed to basic and acidic residues over residues 212 to 237 (EKAA…EKRA) and 245 to 254 (AKSEKAEKSQ).

Belongs to the RimP family.

The protein resides in the cytoplasm. Its function is as follows. Required for maturation of 30S ribosomal subunits. The protein is Ribosome maturation factor RimP of Azorhizobium caulinodans (strain ATCC 43989 / DSM 5975 / JCM 20966 / LMG 6465 / NBRC 14845 / NCIMB 13405 / ORS 571).